The chain runs to 289 residues: NADPH-dependent 7-cyano-7-deazaguanine reductase (289 aa).

Ile81–Ser83 lines the substrate pocket. Ser83–Lys84 serves as a coordination point for NADPH. Residue Cys196 is the Thioimide intermediate of the active site. Asp203 serves as the catalytic Proton donor. Position 235–236 (His235–Glu236) interacts with substrate. Arg264 to Gly265 contributes to the NADPH binding site.

It belongs to the GTP cyclohydrolase I family. QueF type 2 subfamily. As to quaternary structure, homodimer.

It is found in the cytoplasm. It catalyses the reaction 7-aminomethyl-7-carbaguanine + 2 NADP(+) = 7-cyano-7-deazaguanine + 2 NADPH + 3 H(+). It participates in tRNA modification; tRNA-queuosine biosynthesis. Catalyzes the NADPH-dependent reduction of 7-cyano-7-deazaguanine (preQ0) to 7-aminomethyl-7-deazaguanine (preQ1). The protein is NADPH-dependent 7-cyano-7-deazaguanine reductase of Albidiferax ferrireducens (strain ATCC BAA-621 / DSM 15236 / T118) (Rhodoferax ferrireducens).